Here is a 228-residue protein sequence, read N- to C-terminus: Small ribosomal subunit protein uS3 (228 aa).

Residues 39–107 (VREYLQDKLK…PVHINIEEIR (69 aa)) enclose the KH type-2 domain.

The protein belongs to the universal ribosomal protein uS3 family. As to quaternary structure, part of the 30S ribosomal subunit. Forms a tight complex with proteins S10 and S14.

Functionally, binds the lower part of the 30S subunit head. Binds mRNA in the 70S ribosome, positioning it for translation. This Pseudomonas syringae pv. syringae (strain B728a) protein is Small ribosomal subunit protein uS3.